Consider the following 205-residue polypeptide: Recombination protein RecR (205 aa).

Residues 59–74 form a C4-type zinc finger; it reads CAMCNTFCEGGLCDIC. Positions 82–177 constitute a Toprim domain; the sequence is RRLMVVHMPA…KVSRLSQGIP (96 aa).

The protein belongs to the RecR family.

In terms of biological role, may play a role in DNA repair. It seems to be involved in an RecBC-independent recombinational process of DNA repair. It may act with RecF and RecO. This is Recombination protein RecR from Neisseria meningitidis serogroup C (strain 053442).